Reading from the N-terminus, the 243-residue chain is Leucyl/phenylalanyl-tRNA--protein transferase (243 aa).

Belongs to the L/F-transferase family.

The protein resides in the cytoplasm. The catalysed reaction is N-terminal L-lysyl-[protein] + L-leucyl-tRNA(Leu) = N-terminal L-leucyl-L-lysyl-[protein] + tRNA(Leu) + H(+). The enzyme catalyses N-terminal L-arginyl-[protein] + L-leucyl-tRNA(Leu) = N-terminal L-leucyl-L-arginyl-[protein] + tRNA(Leu) + H(+). It catalyses the reaction L-phenylalanyl-tRNA(Phe) + an N-terminal L-alpha-aminoacyl-[protein] = an N-terminal L-phenylalanyl-L-alpha-aminoacyl-[protein] + tRNA(Phe). Functionally, functions in the N-end rule pathway of protein degradation where it conjugates Leu, Phe and, less efficiently, Met from aminoacyl-tRNAs to the N-termini of proteins containing an N-terminal arginine or lysine. This is Leucyl/phenylalanyl-tRNA--protein transferase from Saccharophagus degradans (strain 2-40 / ATCC 43961 / DSM 17024).